The primary structure comprises 729 residues: Fatty acid oxidation complex subunit alpha (729 aa).

The enoyl-CoA hydratase/isomerase stretch occupies residues 1-189 (MLYKGDTLYL…KIGLVDGVVK (189 aa)). Substrate is bound at residue Asp296. The tract at residues 311–729 (ETPKQAAVLG…ARPVGDLKTA (419 aa)) is 3-hydroxyacyl-CoA dehydrogenase. NAD(+) contacts are provided by residues Met324, Asp343, 400–402 (VVE), Lys407, and Ser429. His450 acts as the For 3-hydroxyacyl-CoA dehydrogenase activity in catalysis. An NAD(+)-binding site is contributed by Asn453. Positions 500 and 660 each coordinate substrate. Residues 708-729 (RHNEPYYPPVEPARPVGDLKTA) are disordered.

The protein in the N-terminal section; belongs to the enoyl-CoA hydratase/isomerase family. In the C-terminal section; belongs to the 3-hydroxyacyl-CoA dehydrogenase family. In terms of assembly, heterotetramer of two alpha chains (FadB) and two beta chains (FadA).

The catalysed reaction is a (3S)-3-hydroxyacyl-CoA + NAD(+) = a 3-oxoacyl-CoA + NADH + H(+). It catalyses the reaction a (3S)-3-hydroxyacyl-CoA = a (2E)-enoyl-CoA + H2O. It carries out the reaction a 4-saturated-(3S)-3-hydroxyacyl-CoA = a (3E)-enoyl-CoA + H2O. The enzyme catalyses (3S)-3-hydroxybutanoyl-CoA = (3R)-3-hydroxybutanoyl-CoA. The catalysed reaction is a (3Z)-enoyl-CoA = a 4-saturated (2E)-enoyl-CoA. It catalyses the reaction a (3E)-enoyl-CoA = a 4-saturated (2E)-enoyl-CoA. It participates in lipid metabolism; fatty acid beta-oxidation. Functionally, involved in the aerobic and anaerobic degradation of long-chain fatty acids via beta-oxidation cycle. Catalyzes the formation of 3-oxoacyl-CoA from enoyl-CoA via L-3-hydroxyacyl-CoA. It can also use D-3-hydroxyacyl-CoA and cis-3-enoyl-CoA as substrate. The sequence is that of Fatty acid oxidation complex subunit alpha from Escherichia coli O6:H1 (strain CFT073 / ATCC 700928 / UPEC).